The sequence spans 556 residues: Protein misato homolog 1 (556 aa).

Residue S41 is modified to Phosphoserine.

The protein belongs to the misato family.

Its subcellular location is the mitochondrion outer membrane. It localises to the cytoplasm. Involved in the regulation of mitochondrial distribution and morphology. Required for mitochondrial fusion and mitochondrial network formation. This is Protein misato homolog 1 (Msto1) from Mus musculus (Mouse).